Consider the following 302-residue polypeptide: ATP synthase subunit a (302 aa).

The next 7 membrane-spanning stretches (helical) occupy residues 61-81, 119-139, 148-168, 172-192, 214-234, 252-272, and 273-293; these read VDSLAWSGGLGIIMCLLFWLG, IAPLSLVIFCWVFLMNLMDLI, FEWVMVTFFGWSAHEAYFKIV, DPNITLGMSFSVMFLIIFLTI, PVVKALLIPINLLLETIALLA, FVFILLAAMMGTWQFIGAWPW, and AVFHILVITLQAFIFMVLTIV.

It belongs to the ATPase A chain family. In terms of assembly, F-type ATPases have 2 components, CF(1) - the catalytic core - and CF(0) - the membrane proton channel. CF(1) has five subunits: alpha(3), beta(3), gamma(1), delta(1), epsilon(1). CF(0) has three main subunits: a(1), b(2) and c(9-12). The alpha and beta chains form an alternating ring which encloses part of the gamma chain. CF(1) is attached to CF(0) by a central stalk formed by the gamma and epsilon chains, while a peripheral stalk is formed by the delta and b chains.

The protein resides in the cell inner membrane. In terms of biological role, key component of the proton channel; it plays a direct role in the translocation of protons across the membrane. The polypeptide is ATP synthase subunit a (Alcanivorax borkumensis (strain ATCC 700651 / DSM 11573 / NCIMB 13689 / SK2)).